A 584-amino-acid polypeptide reads, in one-letter code: Proteasome-associated ATPase (584 aa).

Residues 8-90 are a coiled coil; the sequence is RHAERDRDEL…KEEVDRLSQP (83 aa). 272-277 contacts ATP; it reads GCGKTL. Residues 583 to 584 are docks into pockets in the proteasome alpha-ring; that stretch reads YL.

It belongs to the AAA ATPase family. Homohexamer. Assembles into a hexameric ring structure that caps the 20S proteasome core. Strongly interacts with the prokaryotic ubiquitin-like protein Pup through a hydrophobic interface; the interacting region of ARC lies in its N-terminal coiled-coil domain. There is one Pup binding site per ARC hexamer ring. Upon ATP-binding, the C-terminus of ARC interacts with the alpha-rings of the proteasome core, possibly by binding to the intersubunit pockets.

It functions in the pathway protein degradation; proteasomal Pup-dependent pathway. ATPase which is responsible for recognizing, binding, unfolding and translocation of pupylated proteins into the bacterial 20S proteasome core particle. May be essential for opening the gate of the 20S proteasome via an interaction with its C-terminus, thereby allowing substrate entry and access to the site of proteolysis. Thus, the C-termini of the proteasomal ATPase may function like a 'key in a lock' to induce gate opening and therefore regulate proteolysis. The chain is Proteasome-associated ATPase from Thermobifida fusca (strain YX).